The primary structure comprises 204 residues: Recombination protein RecR (204 aa).

Residues 63–78 (CRICCNVADSELCPIC) form a C4-type zinc finger. Residues 86–181 (NKICVVEQPQ…KVTRLARGLP (96 aa)) enclose the Toprim domain.

The protein belongs to the RecR family.

Its function is as follows. May play a role in DNA repair. It seems to be involved in an RecBC-independent recombinational process of DNA repair. It may act with RecF and RecO. In Dehalococcoides mccartyi (strain ATCC BAA-2100 / JCM 16839 / KCTC 5957 / BAV1), this protein is Recombination protein RecR.